The primary structure comprises 282 residues: Elongation factor Ts (282 aa).

The tract at residues 80–83 (TDFV) is involved in Mg(2+) ion dislocation from EF-Tu.

This sequence belongs to the EF-Ts family.

Its subcellular location is the cytoplasm. Functionally, associates with the EF-Tu.GDP complex and induces the exchange of GDP to GTP. It remains bound to the aminoacyl-tRNA.EF-Tu.GTP complex up to the GTP hydrolysis stage on the ribosome. This is Elongation factor Ts from Protochlamydia amoebophila (strain UWE25).